Reading from the N-terminus, the 505-residue chain is Maturase K (505 aa).

The protein belongs to the intron maturase 2 family. MatK subfamily.

The protein resides in the plastid. The protein localises to the chloroplast. Usually encoded in the trnK tRNA gene intron. Probably assists in splicing its own and other chloroplast group II introns. The sequence is that of Maturase K from Kunzea ericoides (White teatree).